Reading from the N-terminus, the 225-residue chain is UPF0758 protein SO_4248 (225 aa).

The MPN domain occupies 102-224 (VLTNPDLTRD…IVSFAERGWI (123 aa)). Zn(2+)-binding residues include His-173, His-175, and Asp-186. A JAMM motif motif is present at residues 173-186 (HNHPSGIAEPSQAD).

Belongs to the UPF0758 family.

The sequence is that of UPF0758 protein SO_4248 from Shewanella oneidensis (strain ATCC 700550 / JCM 31522 / CIP 106686 / LMG 19005 / NCIMB 14063 / MR-1).